A 209-amino-acid polypeptide reads, in one-letter code: T-cell surface glycoprotein CD8 beta chain (209 aa).

The signal sequence occupies residues 1-21; that stretch reads MRPRMWLLLSAQLAALHGNSV. The Ig-like V-type domain maps to 22-131; it reads LQQTPAYIMV…TLIFGTGTQL (110 aa). Residues 22 to 169 are Extracellular-facing; that stretch reads LQQTPAYIMV…ETRKGPLCSP (148 aa). Cysteines 41 and 115 form a disulfide. Asparagine 101 carries an N-linked (GlcNAc...) asparagine glycan. Residues 170 to 190 traverse the membrane as a helical segment; sequence ITLSLLVAGILVLLVSLGVAI. The Cytoplasmic portion of the chain corresponds to 191–209; the sequence is HLYCRQRRARLRFMKQFYK.

Forms disulfide-linked heterodimers with CD8A at the cell surface. Interacts with CD3D; this interaction couples TCR-CD3 with CD8. Interacts with LCK. Phosphorylated as a consequence of T-cell activation. Post-translationally, palmitoylated at the cytoplasmic tail and thereby targets the heterodimer CD8A/CD8B to lipid rafts unlike CD8A homodimers.

Its subcellular location is the cell membrane. Its function is as follows. Integral membrane glycoprotein that plays an essential role in the immune response and serves multiple functions in responses against both external and internal offenses. In T-cells, functions primarily as a coreceptor for MHC class I molecule:peptide complex. The antigens presented by class I peptides are derived from cytosolic proteins while class II derived from extracellular proteins. Interacts simultaneously with the T-cell receptor (TCR) and the MHC class I proteins presented by antigen presenting cells (APCs). In turn, recruits the Src kinase LCK to the vicinity of the TCR-CD3 complex. A palmitoylation site in the cytoplasmic tail of CD8B chain contributes to partitioning of CD8 into the plasma membrane lipid rafts where signaling proteins are enriched. Once LCK recruited, it initiates different intracellular signaling pathways by phosphorylating various substrates ultimately leading to lymphokine production, motility, adhesion and activation of cytotoxic T-lymphocytes (CTLs). Additionally, plays a critical role in thymic selection of CD8+ T-cells. This is T-cell surface glycoprotein CD8 beta chain (CD8B) from Saimiri sciureus (Common squirrel monkey).